The primary structure comprises 976 residues: Villin-2 (976 aa).

Gelsolin-like repeat units lie at residues Phe-27–Gly-77, Ile-148–Ala-188, Gly-260–Lys-302, Gly-399–Asp-450, Asn-531–Glu-571, and Phe-633–Gln-674. A disordered region spans residues Asn-769 to Phe-917. Basic and acidic residues predominate over residues Arg-782 to Ala-794. Low complexity-rich tracts occupy residues Glu-795 to Lys-812, Ser-823 to Ala-841, and Asp-848 to Ser-858. Ser-890 is modified (phosphoserine). Residues Ser-908–Phe-917 show a composition bias toward polar residues. Positions Gln-911–Phe-976 constitute an HP domain.

It belongs to the villin/gelsolin family. As to expression, expressed in all tissues examined. Mainly detected in the root epidermis and vasculature. Expressed in the root cap.

The protein localises to the cytoplasm. It is found in the cytoskeleton. Its function is as follows. Ca(2+)-regulated actin-binding protein. Involved in actin filaments bundling. Caps the barbed end of actin filaments and is able to sever them in a calcium-dependent manner. Required for the construction of actin collars in pollen tubes. Acts redundantly with VLN5 (AC Q9LVC6) to generate thick actin filament bundles and to regulate polarized pollen tube growth. Acts redundantly with VLN3 (AC O81645) to regulate directional organ growth and in sclerenchyma development. This is Villin-2 from Arabidopsis thaliana (Mouse-ear cress).